The following is a 1073-amino-acid chain: Carbamoyl phosphate synthase large chain (1073 aa).

Positions 2 to 403 (PKRTDIKSIL…SVQKALRGLE (402 aa)) are carboxyphosphate synthetic domain. ATP-binding residues include Arg-129, Arg-169, Gly-175, Gly-176, Glu-208, Leu-210, Glu-215, Gly-241, Val-242, His-243, Gln-285, and Glu-299. Positions 133 to 328 (DKAMKDIGLA…IAKIAAKLAV (196 aa)) constitute an ATP-grasp 1 domain. Mg(2+) is bound by residues Gln-285, Glu-299, and Asn-301. Residues Gln-285, Glu-299, and Asn-301 each contribute to the Mn(2+) site. The segment at 404 to 553 (VGATGFDPKL…YSTYEEECEA (150 aa)) is oligomerization domain. Residues 554–935 (NPSSREKIMI…AFAKAQLGAS (382 aa)) form a carbamoyl phosphate synthetic domain region. The region spanning 678–869 (QQMVQRLNLR…LAKVAARVMA (192 aa)) is the ATP-grasp 2 domain. 10 residues coordinate ATP: Arg-714, His-753, Leu-755, Glu-760, Gly-785, Val-786, His-787, Ser-788, Gln-828, and Glu-840. Residues Gln-828, Glu-840, and Asn-842 each coordinate Mg(2+). Mn(2+) is bound by residues Gln-828, Glu-840, and Asn-842. The 138-residue stretch at 936 to 1073 (EILPTAGCAF…LQDLHAGIKA (138 aa)) folds into the MGS-like domain. Positions 936 to 1073 (EILPTAGCAF…LQDLHAGIKA (138 aa)) are allosteric domain.

Belongs to the CarB family. Composed of two chains; the small (or glutamine) chain promotes the hydrolysis of glutamine to ammonia, which is used by the large (or ammonia) chain to synthesize carbamoyl phosphate. Tetramer of heterodimers (alpha,beta)4. Requires Mg(2+) as cofactor. Mn(2+) is required as a cofactor.

The catalysed reaction is hydrogencarbonate + L-glutamine + 2 ATP + H2O = carbamoyl phosphate + L-glutamate + 2 ADP + phosphate + 2 H(+). It carries out the reaction hydrogencarbonate + NH4(+) + 2 ATP = carbamoyl phosphate + 2 ADP + phosphate + 2 H(+). The protein operates within amino-acid biosynthesis; L-arginine biosynthesis; carbamoyl phosphate from bicarbonate: step 1/1. It functions in the pathway pyrimidine metabolism; UMP biosynthesis via de novo pathway; (S)-dihydroorotate from bicarbonate: step 1/3. Large subunit of the glutamine-dependent carbamoyl phosphate synthetase (CPSase). CPSase catalyzes the formation of carbamoyl phosphate from the ammonia moiety of glutamine, carbonate, and phosphate donated by ATP, constituting the first step of 2 biosynthetic pathways, one leading to arginine and/or urea and the other to pyrimidine nucleotides. The large subunit (synthetase) binds the substrates ammonia (free or transferred from glutamine from the small subunit), hydrogencarbonate and ATP and carries out an ATP-coupled ligase reaction, activating hydrogencarbonate by forming carboxy phosphate which reacts with ammonia to form carbamoyl phosphate. This Pseudomonas aeruginosa (strain ATCC 15692 / DSM 22644 / CIP 104116 / JCM 14847 / LMG 12228 / 1C / PRS 101 / PAO1) protein is Carbamoyl phosphate synthase large chain.